A 468-amino-acid polypeptide reads, in one-letter code: Peroxisome proliferator-activated receptor alpha (468 aa).

Positions 99 to 173 form a DNA-binding region, nuclear receptor; sequence NIECRICGDK…VGMSHNAIRF (75 aa). NR C4-type zinc fingers lie at residues 102 to 122 and 139 to 161; these read CRICGDKASGYHYGVHACEGC and CDRSCKIQKKNRNKCQYCRFHKC. Residues 239-466 form the NR LBD domain; the sequence is FVIHDMETLC…HPLLQEIYRD (228 aa). Indeglitazar contacts are provided by Ser-280, Tyr-314, and Tyr-464. Positions 304-433 are required for heterodimerization with RXRA; that stretch reads DQVTLLKYGV…PKLLQKMADL (130 aa).

This sequence belongs to the nuclear hormone receptor family. NR1 subfamily. In terms of assembly, heterodimer; with RXRA. This heterodimerization is required for DNA binding and transactivation activity. Interacts with NCOA3 coactivator. Interacts with CITED2; the interaction stimulates its transcriptional activity. Also interacts with PPARBP in vitro. Interacts with AKAP13, LPIN1, PRDM16 and coactivator NCOA6. Interacts with ASXL1 and ASXL2. Interacts with PER2. Interacts with SIRT1; the interaction seems to be modulated by NAD(+) levels. Interacts with CRY1 and CRY2. In hepatocytes, interacts with PAQR3 and HUWE1; the interactions promote PPARA poylubiquitination and HUWE1-mediated degradation. Ubiquitinated by E3 ubiquitin-protein ligase HUWE1; leading to proteasomal degradation. Post-translationally, phosphorylated. In terms of tissue distribution, skeletal muscle, liver, heart and kidney. Expressed in monocytes.

It is found in the nucleus. In terms of biological role, ligand-activated transcription factor. Key regulator of lipid metabolism. Activated by the endogenous ligand 1-palmitoyl-2-oleoyl-sn-glycerol-3-phosphocholine (16:0/18:1-GPC). Activated by oleylethanolamide, a naturally occurring lipid that regulates satiety. Receptor for peroxisome proliferators such as hypolipidemic drugs and fatty acids. Regulates the peroxisomal beta-oxidation pathway of fatty acids. Functions as a transcription activator for the ACOX1 and P450 genes. Transactivation activity requires heterodimerization with RXRA and is antagonized by NR2C2. May be required for the propagation of clock information to metabolic pathways regulated by PER2. The polypeptide is Peroxisome proliferator-activated receptor alpha (PPARA) (Homo sapiens (Human)).